Here is a 620-residue protein sequence, read N- to C-terminus: MRDIVFVSPQLYLSSQEGWKSDSAKSGFIPILKNDLQRFQDSLKHIVDARNSLSETLLNSNDDGSIHNSDQNTGLNKDKEASIADNNSANKCATSSSRYQELKQFLPISLDQQIHTVSLQGVSSSFSRGQIESLLDHCLNLALTETQSNSALKVEAWSSFSSFLDTQDIFIRFSKVDEDEAFVNTLNYCKALFAFIRKLHEDFKIELHLDLNTKEYVEDRTGTIPSVKPEKASEFYSVFKNIEDQTDERNSKKEQLDDSSTQYKVDTNTLSDLPSDALDQLCKDIIEFRTKVVSIEKEKKMKSTYEESRRQRHQMQKVFDQIRKNHSGAKGSANTEEEDTNMEDEDEEDDTEDDLALEKRKEERDLEESNRRYEDMLHQLHSNTEPKIKSIRADIMSAENYEEHLEKNRSLYLKELLHLANDVHYDHHRSFKEQEERRDEEDRAKNGNAKELAPIQLSDGKAISAGKAAAITLPEGTVKSENYNADKNVSESSEHVKIKFDFKKAIDHSVESSSEDEGYRESELPPTKPSERSAAEDRLPFTADELNIRLTNLKESRYVDELVREFLGVYEDELVEYILENIRVNQSKQALLNELRETFDEDGETIADRLWSRKEFRLGT.

Positions 59–75 are enriched in polar residues; that stretch reads NSNDDGSIHNSDQNTGL. 5 disordered regions span residues 59–82, 246–270, 323–373, 428–452, and 509–537; these read NSND…KEAS, TDER…TNTL, RKNH…NRRY, HRSF…AKEL, and SVES…AAED. Basic and acidic residues predominate over residues 246–256; that stretch reads TDERNSKKEQL. Over residues 258–270 the composition is skewed to polar residues; the sequence is DSSTQYKVDTNTL. Residues 296–385 adopt a coiled-coil conformation; the sequence is EKEKKMKSTY…MLHQLHSNTE (90 aa). The segment covering 335-355 has biased composition (acidic residues); sequence TEEEDTNMEDEDEEDDTEDDL. 2 stretches are compositionally biased toward basic and acidic residues: residues 356-373 and 431-445; these read ALEK…NRRY and FKEQ…DRAK. A phosphoserine mark is found at S512 and S514. Over residues 517–537 the composition is skewed to basic and acidic residues; sequence EGYRESELPPTKPSERSAAED.

This sequence belongs to the SNU71 family. In terms of assembly, component of the 18S U1 snRNP particle, a subcomplex of the spliceosome.

It localises to the cytoplasm. The protein localises to the nucleus. In terms of biological role, component of the U1 snRNP particle, which recognizes and binds the 5'-splice site of pre-mRNA. Together with other non-snRNP factors, U1 snRNP forms the spliceosomal commitment complex, that targets pre-mRNA to the splicing pathway. The protein is U1 small nuclear ribonucleoprotein component SNU71 (SNU71) of Saccharomyces cerevisiae (strain ATCC 204508 / S288c) (Baker's yeast).